Reading from the N-terminus, the 327-residue chain is Aspartate--ammonia ligase (327 aa).

This sequence belongs to the class-II aminoacyl-tRNA synthetase family. AsnA subfamily.

The protein resides in the cytoplasm. It carries out the reaction L-aspartate + NH4(+) + ATP = L-asparagine + AMP + diphosphate + H(+). It functions in the pathway amino-acid biosynthesis; L-asparagine biosynthesis; L-asparagine from L-aspartate (ammonia route): step 1/1. The polypeptide is Aspartate--ammonia ligase (Bacillus cereus (strain AH820)).